The primary structure comprises 159 residues: uncharacterized protein (159 aa).

This sequence to M.jannaschii MJECL20.

This is an uncharacterized protein from Methanocaldococcus jannaschii (strain ATCC 43067 / DSM 2661 / JAL-1 / JCM 10045 / NBRC 100440) (Methanococcus jannaschii).